The following is a 553-amino-acid chain: Mucolipin-3 (553 aa).

Residues 1–62 are Cytoplasmic-facing; sequence MADPEVVVSS…FWARGRKPWK (62 aa). The tract at residues 52–62 is interaction with phosphoinositides; sequence KFWARGRKPWK. Residues 63–83 form a helical membrane-spanning segment; sequence LAIQILKIAMVTIQLVLFGLS. Topologically, residues 84-283 are extracellular; that stretch reads NQMVVAFKEE…VSGSIQKNTH (200 aa). Positions 104–118 are extracellular/lumenal pore loop; it reads KGYMDRMDDTYAVYT. N-linked (GlcNAc...) asparagine glycans are attached at residues N138, N172, and N205. A disulfide bridge links C159 with C185. A disulfide bridge links C238 with C269. The chain crosses the membrane as a helical span at residues 284–304; the sequence is YMMIFDAFVILTCLVSLILCI. The Cytoplasmic segment spans residues 305 to 341; it reads RSVIRGLQLQQEFVNFFLLHYKKEVSVSDQMEFVNGW. The helical transmembrane segment at 342 to 362 threads the bilayer; that stretch reads YIMIIISDILTIIGSILKMEI. At 363-371 the chain is on the extracellular side; that stretch reads QAKSLTSYD. Residues 372-392 traverse the membrane as a helical segment; that stretch reads VCSILLGTSTMLVWLGVIRYL. The Cytoplasmic portion of the chain corresponds to 393 to 414; that stretch reads GFFAKYNLLILTLQAALPNVIR. Residues 415-435 traverse the membrane as a helical segment; the sequence is FCCCAAMIYLGYCFCGWIVLG. Residues 436 to 443 are Extracellular-facing; it reads PYHDKFRS. Positions 444–464 form an intramembrane region, pore-forming; sequence LNMVSECLFSLINGDDMFATF. A Selectivity filter motif is present at residues 456 to 459; it reads NGDD. Over 465–475 the chain is Extracellular; it reads AKMQQKSYLVW. A helical transmembrane segment spans residues 476-497; that stretch reads LFSRIYLYSFISLFIYMILSLF. At 498 to 553 the chain is on the cytoplasmic side; the sequence is IALITDTYETIKQYQQDGFPETELRTFISECKDLPNSGKYRLEDDPPVSLFCCCKK.

It belongs to the transient receptor (TC 1.A.4) family. Polycystin subfamily. MCOLN3 sub-subfamily. In terms of assembly, homotetramer. Can heterooligomerize with MCOLN1; heteromeric assemblies have different channel properties as compared to the respective homooligomers and may be tissue-specific. May heterooligomerize with TRPV5 to form a functional distinct ion channel. Interacts with GABARAPL2. In terms of processing, N-glycosylated.

Its subcellular location is the cell membrane. The protein resides in the early endosome membrane. It localises to the late endosome membrane. It is found in the lysosome membrane. The protein localises to the cytoplasmic vesicle. Its subcellular location is the autophagosome membrane. It carries out the reaction Ca(2+)(in) = Ca(2+)(out). The enzyme catalyses K(+)(in) = K(+)(out). The catalysed reaction is Na(+)(in) = Na(+)(out). Channel activity is activated by PtdIns(3,5)P2 (phosphatidylinositol 3,5-bisphosphate). Inhibited by lumenal H(+) and Na(+). The channel pore shows dynamic behavior and undergoes spontaneous, Ca(2+)-dependent modulation when conducting Ca(2+). In terms of biological role, nonselective cation channel probably playing a role in the regulation of membrane trafficking events. Acts as a Ca(2+)-permeable cation channel with inwardly rectifying activity. Mediates release of Ca(2+) from endosomes to the cytoplasm, contributes to endosomal acidification and is involved in the regulation of membrane trafficking and fusion in the endosomal pathway. Also permeable to Mg(2+), Na(+) and K(+). Does not seem to act as mechanosensory transduction channel in inner ear sensory hair cells. Proposed to play a critical role at the cochlear stereocilia ankle-link region during hair-bundle growth. Involved in the regulation of autophagy. Through association with GABARAPL2 may be involved in autophagosome formation possibly providing Ca(2+) for the fusion process. Through a possible and probably tissue-specific heteromerization with MCOLN1 may be at least in part involved in many lysosome-dependent cellular events. Possible heteromeric ion channel assemblies with TRPV5 show pharmacological similarity with TRPML3. This Homo sapiens (Human) protein is Mucolipin-3 (MCOLN3).